A 164-amino-acid chain; its full sequence is Peptide methionine sulfoxide reductase MsrA (164 aa).

The active site involves Cys-16.

The protein belongs to the MsrA Met sulfoxide reductase family.

The enzyme catalyses L-methionyl-[protein] + [thioredoxin]-disulfide + H2O = L-methionyl-(S)-S-oxide-[protein] + [thioredoxin]-dithiol. The catalysed reaction is [thioredoxin]-disulfide + L-methionine + H2O = L-methionine (S)-S-oxide + [thioredoxin]-dithiol. In terms of biological role, has an important function as a repair enzyme for proteins that have been inactivated by oxidation. Catalyzes the reversible oxidation-reduction of methionine sulfoxide in proteins to methionine. The protein is Peptide methionine sulfoxide reductase MsrA of Methanoculleus marisnigri (strain ATCC 35101 / DSM 1498 / JR1).